A 54-amino-acid chain; its full sequence is Large ribosomal subunit protein bL32c (54 aa).

Belongs to the bacterial ribosomal protein bL32 family.

Its subcellular location is the plastid. The protein localises to the chloroplast. This chain is Large ribosomal subunit protein bL32c, found in Cucumis sativus (Cucumber).